The following is a 443-amino-acid chain: UDP-N-acetylmuramate--L-alanine ligase (443 aa).

110 to 116 (GAHGKTS) contributes to the ATP binding site.

This sequence belongs to the MurCDEF family.

It localises to the cytoplasm. The enzyme catalyses UDP-N-acetyl-alpha-D-muramate + L-alanine + ATP = UDP-N-acetyl-alpha-D-muramoyl-L-alanine + ADP + phosphate + H(+). The protein operates within cell wall biogenesis; peptidoglycan biosynthesis. Cell wall formation. This is UDP-N-acetylmuramate--L-alanine ligase from Streptococcus agalactiae serotype III (strain NEM316).